We begin with the raw amino-acid sequence, 406 residues long: L-carnitine CoA-transferase (406 aa).

Residues K98 and R105 each contribute to the CoA site. Catalysis depends on D170, which acts as the Nucleophile.

This sequence belongs to the CoA-transferase III family. CaiB subfamily. As to quaternary structure, homodimer.

The protein localises to the cytoplasm. It catalyses the reaction crotonobetainyl-CoA + (R)-carnitine = crotonobetaine + (R)-carnitinyl-CoA. It carries out the reaction 4-(trimethylamino)butanoyl-CoA + (R)-carnitine = (R)-carnitinyl-CoA + 4-(trimethylamino)butanoate. It functions in the pathway amine and polyamine metabolism; carnitine metabolism. Catalyzes the reversible transfer of the CoA moiety from gamma-butyrobetainyl-CoA to L-carnitine to generate L-carnitinyl-CoA and gamma-butyrobetaine. Is also able to catalyze the reversible transfer of the CoA moiety from gamma-butyrobetainyl-CoA or L-carnitinyl-CoA to crotonobetaine to generate crotonobetainyl-CoA. In Proteus mirabilis (strain HI4320), this protein is L-carnitine CoA-transferase.